The primary structure comprises 159 residues: 2-C-methyl-D-erythritol 2,4-cyclodiphosphate synthase (159 aa).

Residues Asp-11 and His-13 each contribute to the a divalent metal cation site. Residues 11 to 13 (DVH) and 37 to 38 (HS) contribute to the 4-CDP-2-C-methyl-D-erythritol 2-phosphate site. Position 45 (His-45) interacts with a divalent metal cation. 4-CDP-2-C-methyl-D-erythritol 2-phosphate-binding positions include 59 to 61 (DIG) and 64 to 68 (FPDSD).

The protein belongs to the IspF family. As to quaternary structure, homotrimer. The cofactor is a divalent metal cation.

It carries out the reaction 4-CDP-2-C-methyl-D-erythritol 2-phosphate = 2-C-methyl-D-erythritol 2,4-cyclic diphosphate + CMP. The protein operates within isoprenoid biosynthesis; isopentenyl diphosphate biosynthesis via DXP pathway; isopentenyl diphosphate from 1-deoxy-D-xylulose 5-phosphate: step 4/6. Functionally, involved in the biosynthesis of isopentenyl diphosphate (IPP) and dimethylallyl diphosphate (DMAPP), two major building blocks of isoprenoid compounds. Catalyzes the conversion of 4-diphosphocytidyl-2-C-methyl-D-erythritol 2-phosphate (CDP-ME2P) to 2-C-methyl-D-erythritol 2,4-cyclodiphosphate (ME-CPP) with a corresponding release of cytidine 5-monophosphate (CMP). This is 2-C-methyl-D-erythritol 2,4-cyclodiphosphate synthase from Solibacter usitatus (strain Ellin6076).